Here is a 332-residue protein sequence, read N- to C-terminus: Putative peptide import ATP-binding protein BruAb2_1033 (332 aa).

Positions 11–261 (LEVSNLSVDF…PLHPYTEGLL (251 aa)) constitute an ABC transporter domain. ATP is bound at residue 47 to 54 (GESGSGKS).

This sequence belongs to the ABC transporter superfamily. As to quaternary structure, the complex is composed of two ATP-binding proteins (BruAb2_1033 and BruAb2_1034), two transmembrane proteins (BruAb2_1031 and BruAb2_1032) and a solute-binding protein (BruAb2_1030).

The protein resides in the cell inner membrane. Functionally, probably part of an ABC transporter complex that could be involved in peptide import. Probably responsible for energy coupling to the transport system. The polypeptide is Putative peptide import ATP-binding protein BruAb2_1033 (Brucella abortus biovar 1 (strain 9-941)).